Here is a 433-residue protein sequence, read N- to C-terminus: Transcription factor TCP18 (433 aa).

Disordered stretches follow at residues Gln-130 to Asp-163 and Asp-247 to Ile-281. Residues Arg-148–Ile-206 form the TCP domain. A R domain is found at Lys-287–Lys-304.

In terms of tissue distribution, expressed in unelongated axillary buds, and, to a lower extent, in axillary structures such as flowers and siliques.

The protein resides in the nucleus. Functionally, transcription factor that prevents axillary bud outgrowth and delays early axillary bud development. Indirectly required for the auxin-induced control of apical dominance. This is Transcription factor TCP18 from Arabidopsis thaliana (Mouse-ear cress).